The chain runs to 122 residues: S-adenosylmethionine decarboxylase proenzyme (122 aa).

Catalysis depends on Ser-69, which acts as the Schiff-base intermediate with substrate; via pyruvic acid. Position 69 is a pyruvic acid (Ser); by autocatalysis (Ser-69). Residue His-74 is the Proton acceptor; for processing activity of the active site. The Proton donor; for catalytic activity role is filled by Cys-89.

The protein belongs to the prokaryotic AdoMetDC family. Type 1 subfamily. Heterotetramer of two alpha and two beta chains arranged as a dimer of alpha/beta heterodimers. Pyruvate is required as a cofactor. Post-translationally, is synthesized initially as an inactive proenzyme. Formation of the active enzyme involves a self-maturation process in which the active site pyruvoyl group is generated from an internal serine residue via an autocatalytic post-translational modification. Two non-identical subunits are generated from the proenzyme in this reaction, and the pyruvate is formed at the N-terminus of the alpha chain, which is derived from the carboxyl end of the proenzyme. The post-translation cleavage follows an unusual pathway, termed non-hydrolytic serinolysis, in which the side chain hydroxyl group of the serine supplies its oxygen atom to form the C-terminus of the beta chain, while the remainder of the serine residue undergoes an oxidative deamination to produce ammonia and the pyruvoyl group blocking the N-terminus of the alpha chain.

It carries out the reaction S-adenosyl-L-methionine + H(+) = S-adenosyl 3-(methylsulfanyl)propylamine + CO2. It participates in amine and polyamine biosynthesis; S-adenosylmethioninamine biosynthesis; S-adenosylmethioninamine from S-adenosyl-L-methionine: step 1/1. In terms of biological role, catalyzes the decarboxylation of S-adenosylmethionine to S-adenosylmethioninamine (dcAdoMet), the propylamine donor required for the synthesis of the polyamines spermine and spermidine from the diamine putrescine. The polypeptide is S-adenosylmethionine decarboxylase proenzyme (Sulfurisphaera tokodaii (strain DSM 16993 / JCM 10545 / NBRC 100140 / 7) (Sulfolobus tokodaii)).